Reading from the N-terminus, the 187-residue chain is MADADLANIVTTRRDESMGWLQSIVSKGLGWARKYSLFTYPYATACCGMEYMSVAASRHDISRFGAEFPRFSPRQADLLMVVGTINLKQAPILKRVYEQMAEPKWVVAFGVCASSGGFYDNYAVLQGIDRIIPVDVYIPGCPPRPEQVLDGLMLLQDKIGNQVHRIAEREEANPTAARHNLLLSMNK.

[4Fe-4S] cluster-binding residues include C46, C47, C112, and C141.

This sequence belongs to the complex I 20 kDa subunit family. As to quaternary structure, NDH-1 is composed of 14 different subunits. Subunits NuoB, C, D, E, F, and G constitute the peripheral sector of the complex. It depends on [4Fe-4S] cluster as a cofactor.

Its subcellular location is the cell inner membrane. It carries out the reaction a quinone + NADH + 5 H(+)(in) = a quinol + NAD(+) + 4 H(+)(out). In terms of biological role, NDH-1 shuttles electrons from NADH, via FMN and iron-sulfur (Fe-S) centers, to quinones in the respiratory chain. The immediate electron acceptor for the enzyme in this species is believed to be ubiquinone. Couples the redox reaction to proton translocation (for every two electrons transferred, four hydrogen ions are translocated across the cytoplasmic membrane), and thus conserves the redox energy in a proton gradient. This is NADH-quinone oxidoreductase subunit B from Myxococcus xanthus (strain DK1622).